Reading from the N-terminus, the 103-residue chain is Putative inactive recombination-promoting nuclease-like protein YjiP (103 aa).

Belongs to the Rpn/YhgA-like nuclease family.

Its function is as follows. This pseudogene is the N-terminal fragment of low activity DNA endonuclease RpnD which probably yields 3'-hydroxyl ends. The intact protein can be seen in this entry (AC B7NGZ6). Expression of the repaired protein increases the frequency of recA-independent recombination, but also decreases viability probably via DNA damage; in a RecA strain expression has no effect on viability but does induce the SOS repair response. May play a role in horizontal gene transfer. This Escherichia coli (strain K12) protein is Putative inactive recombination-promoting nuclease-like protein YjiP (yjiP).